The primary structure comprises 1072 residues: Carbamoyl phosphate synthase large chain (1072 aa).

The interval M1–E401 is carboxyphosphate synthetic domain. ATP is bound by residues R129, R169, G175, G176, K208, I210, E215, G241, V242, H243, Q284, and E298. The ATP-grasp 1 domain occupies R133–V327. Q284, E298, and N300 together coordinate Mg(2+). Positions 284, 298, and 300 each coordinate Mn(2+). The tract at residues L402 to S546 is oligomerization domain. Residues I547–G929 are carbamoyl phosphate synthetic domain. In terms of domain architecture, ATP-grasp 2 spans E671–L861. The ATP site is built by R707, R746, E752, G777, V778, H779, S780, Q820, and E832. Residues Q820, E832, and N834 each contribute to the Mg(2+) site. Mn(2+) is bound by residues Q820, E832, and N834. One can recognise an MGS-like domain in the interval I930 to A1072. Positions I930–A1072 are allosteric domain.

This sequence belongs to the CarB family. As to quaternary structure, composed of two chains; the small (or glutamine) chain promotes the hydrolysis of glutamine to ammonia, which is used by the large (or ammonia) chain to synthesize carbamoyl phosphate. Tetramer of heterodimers (alpha,beta)4. Mg(2+) is required as a cofactor. Requires Mn(2+) as cofactor.

It catalyses the reaction hydrogencarbonate + L-glutamine + 2 ATP + H2O = carbamoyl phosphate + L-glutamate + 2 ADP + phosphate + 2 H(+). The enzyme catalyses hydrogencarbonate + NH4(+) + 2 ATP = carbamoyl phosphate + 2 ADP + phosphate + 2 H(+). It functions in the pathway amino-acid biosynthesis; L-arginine biosynthesis; carbamoyl phosphate from bicarbonate: step 1/1. It participates in pyrimidine metabolism; UMP biosynthesis via de novo pathway; (S)-dihydroorotate from bicarbonate: step 1/3. Its function is as follows. Large subunit of the glutamine-dependent carbamoyl phosphate synthetase (CPSase). CPSase catalyzes the formation of carbamoyl phosphate from the ammonia moiety of glutamine, carbonate, and phosphate donated by ATP, constituting the first step of 2 biosynthetic pathways, one leading to arginine and/or urea and the other to pyrimidine nucleotides. The large subunit (synthetase) binds the substrates ammonia (free or transferred from glutamine from the small subunit), hydrogencarbonate and ATP and carries out an ATP-coupled ligase reaction, activating hydrogencarbonate by forming carboxy phosphate which reacts with ammonia to form carbamoyl phosphate. This is Carbamoyl phosphate synthase large chain from Bacillus cereus (strain B4264).